The following is a 230-amino-acid chain: Large ribosomal subunit protein uL1 (230 aa).

The protein belongs to the universal ribosomal protein uL1 family. Part of the 50S ribosomal subunit.

Functionally, binds directly to 23S rRNA. The L1 stalk is quite mobile in the ribosome, and is involved in E site tRNA release. In terms of biological role, protein L1 is also a translational repressor protein, it controls the translation of the L11 operon by binding to its mRNA. The chain is Large ribosomal subunit protein uL1 from Afipia carboxidovorans (strain ATCC 49405 / DSM 1227 / KCTC 32145 / OM5) (Oligotropha carboxidovorans).